Here is a 326-residue protein sequence, read N- to C-terminus: MSRLLLAPMEGVADFVMRDVLTSVGGYDGCVSEFVRVTGSLLPARTYERETPEIRNGGYTASGTPMVIQLLGSDPEWLARNAAQAATVSPHGIDLNFGCPAKVVNRHGGGAMLLATPELLHRIVSTVRAAVPARIAVTAKMRLGVSDTSLAIACATALAEGGAASLVVHARTRDHGYRPPAHWDWIARIADAVRVPVVANGEVWTVDDWARCRAVSGCDDVMIGRGAVSDPFLALRIRGQMARQPSDAEWPLVLGCLADYLKKLRARIAIHHEHGRVKLWLGYLKRTWPQAAELHDAIRRLQDSAEILGVIEHALARIGQQSAPAG.

FMN contacts are provided by residues 8–10 (PME) and Q69. The active-site Proton donor is the C99. FMN contacts are provided by residues K140, 200–202 (NGE), and 224–225 (GR).

Belongs to the Dus family. DusC subfamily. FMN is required as a cofactor.

It catalyses the reaction 5,6-dihydrouridine(16) in tRNA + NADP(+) = uridine(16) in tRNA + NADPH + H(+). The enzyme catalyses 5,6-dihydrouridine(16) in tRNA + NAD(+) = uridine(16) in tRNA + NADH + H(+). Functionally, catalyzes the synthesis of 5,6-dihydrouridine (D), a modified base found in the D-loop of most tRNAs, via the reduction of the C5-C6 double bond in target uridines. Specifically modifies U16 in tRNAs. The polypeptide is tRNA-dihydrouridine(16) synthase (Ralstonia nicotianae (strain ATCC BAA-1114 / GMI1000) (Ralstonia solanacearum)).